Here is a 2531-residue protein sequence, read N- to C-terminus: Neurogenic locus notch homolog protein 1 (2531 aa).

The N-terminal stretch at 1 to 18 (MPRLLTPLLCLTLLPALA) is a signal peptide. Residues 19-1725 (ARGLRCSQPS…VEPPLPSQLH (1707 aa)) lie on the Extracellular side of the membrane. EGF-like domains lie at 20–58 (RGLRCSQPSGTCLNGGRCEVANGTEACVCSGAFVGQRCQ), 59–99 (DSNP…PLCL), 102–139 (LDNACLANPCRNGGTCDLLTLTEYKCRCPPGWSGKSCQ), and 140–176 (QADPCASNPCANGGQCLPFESSYICRCPPGFHGPTCR). 32 disulfide bridges follow: C24–C37, C31–C46, C63–C74, C68–C87, C89–C98, C106–C117, C111–C127, C129–C138, C144–C155, C149–C164, C166–C175, C182–C195, C189–C204, C206–C215, C222–C233, C227–C243, C245–C254, C261–C272, C266–C281, C283–C292, C299–C312, C306–C321, C323–C332, C339–C350, C344–C359, C361–C370, C376–C387, C381–C398, C400–C409, C416–C429, C423–C438, and C440–C449. S65 carries an O-linked (Glc...) serine glycan. T73 carries O-linked (Fuc...) threonine glycosylation. T116 is a glycosylation site (O-linked (Fuc...) threonine). S146 is a glycosylation site (O-linked (Glc...) serine). Positions 178–216 (DVNECSQNPGLCRHGGTCHNEIGSYRCACRATHTGPHCE) constitute an EGF-like 5; calcium-binding domain. T194 carries O-linked (Fuc...) threonine glycosylation. Positions 218–255 (PYVPCSPSPCQNGGTCRPTGDTTHECACLPGFAGQNCE) constitute an EGF-like 6 domain. T232 carries O-linked (Fuc...) threonine; alternate glycosylation. T232 carries an O-linked (GalNAc...) threonine; alternate glycan. The region spanning 257 to 293 (NVDDCPGNNCKNGGACVDGVNTYNCRCPPEWTGQYCT) is the EGF-like 7; calcium-binding domain. An EGF-like 8; calcium-binding domain is found at 295–333 (DVDECQLMPNACQNGGTCHNTHGGYNCVCVNGWTGEDCS). T311 is a glycosylation site (O-linked (Fuc...) threonine). The region spanning 335-371 (NIDDCASAACFQGATCHDRVASFYCECPHGRTGLLCH) is the EGF-like 9; calcium-binding domain. S341 carries O-linked (Glc...) serine glycosylation. O-linked (Fuc...) threonine glycosylation is present at T349. An EGF-like 10; calcium-binding domain is found at 372–410 (LNDACISNPCNEGSNCDTNPVNGKAICTCPSGYTGPACS). A glycan (O-linked (Glc...) serine) is linked at S378. Positions 412–450 (DVDECALGANPCEHAGKCLNTLGSFECQCLQGYTGPRCE) constitute an EGF-like 11; calcium-binding domain. The interval 420 to 421 (AN) is interaction with DLL4. Residues T432 and S435 each contribute to the Ca(2+) site. S435 is a glycosylation site (O-linked (Glc...) serine). The interval 448–452 (RCEID) is interaction with DLL4. Ca(2+)-binding residues include D452, V453, and E455. In terms of domain architecture, EGF-like 12; calcium-binding spans 452–488 (DVNECISNPCQNDATCLDQIGEFQCICMPGYEGVYCE). 3 disulfides stabilise this stretch: C456–C467, C461–C476, and C478–C487. O-linked (Glc...) serine glycosylation occurs at S458. T466 is a glycosylation site (O-linked (Fuc...) threonine). Residues D469 and Q470 each coordinate Ca(2+). 3 residues coordinate Ca(2+): N490, T491, and E493. Residues 490 to 526 (NTDECASSPCLHNGHCMDKINEFQCQCPKGFNGHLCQ) form the EGF-like 13; calcium-binding domain. 75 disulfide bridges follow: C494-C505, C499-C514, C516-C525, C532-C543, C537-C552, C554-C563, C570-C580, C575-C589, C591-C600, C607-C618, C612-C627, C629-C638, C645-C655, C650-C664, C666-C675, C682-C693, C687-C702, C704-C713, C720-C730, C725-C739, C741-C750, C757-C768, C762-C777, C779-C788, C795-C806, C800-C815, C817-C826, C833-C844, C838-C855, C857-C866, C873-C884, C878-C893, C895-C904, C911-C922, C916-C931, C933-C942, C949-C960, C954-C969, C971-C980, C987-C998, C992-C1007, C1009-C1018, C1025-C1036, C1030-C1045, C1047-C1056, C1063-C1074, C1068-C1083, C1085-C1094, C1101-C1122, C1116-C1131, C1133-C1142, C1149-C1160, C1154-C1169, C1171-C1180, C1187-C1198, C1192-C1207, C1209-C1218, C1225-C1244, C1238-C1253, C1255-C1264, C1271-C1284, C1276-C1293, C1295-C1304, C1311-C1322, C1316-C1334, C1336-C1345, C1352-C1363, C1357-C1372, C1374-C1383, C1391-C1403, C1397-C1414, C1416-C1425, C1449-C1472, C1454-C1467, and C1463-C1479. S496 carries O-linked (Glc...) serine glycosylation. Ca(2+)-binding residues include D507 and K508. Residues 528–564 (DVDECASTPCKNGAKCLDGPNTYTCVCTEGYTGTHCE) enclose the EGF-like 14; calcium-binding domain. A glycan (O-linked (Glc...) serine) is linked at S534. Residues 566–601 (DIDECDPDPCHYGSCKDGVATFTCLCQPGYTGHHCE) enclose the EGF-like 15; calcium-binding domain. Residues 603 to 639 (NINECHSQPCRHGGTCQDRDNSYLCLCLKGTTGPNCE) form the EGF-like 16; calcium-binding domain. O-linked (Glc...) serine glycosylation occurs at S609. O-linked (Fuc...) threonine glycosylation occurs at T617. The EGF-like 17; calcium-binding domain occupies 641–676 (NLDDCASNPCDSGTCLDKIDGYECACEPGYTGSMCN). A glycan (O-linked (Glc...) serine) is linked at S647. The region spanning 678–714 (NIDECAGSPCHNGGTCEDGIAGFTCRCPEGYHDPTCL) is the EGF-like 18; calcium-binding domain. T692 is a glycosylation site (O-linked (Fuc...) threonine). The 36-residue stretch at 716 to 751 (EVNECNSNPCIHGACRDGLNGYKCDCAPGWSGTNCD) folds into the EGF-like 19; calcium-binding domain. Residue S722 is glycosylated (O-linked (Glc...) serine). The EGF-like 20; calcium-binding domain maps to 753–789 (NNNECESNPCVNGGTCKDMTSGYVCTCREGFSGPNCQ). S759 is a glycosylation site (O-linked (Glc...) serine). T767 carries O-linked (Fuc...) threonine glycosylation. O-linked (GlcNAc) serine glycosylation is present at S784. An EGF-like 21; calcium-binding domain is found at 791–827 (NINECASNPCLNQGTCIDDVAGYKCNCPLPYTGATCE). S797 carries O-linked (Glc...) serine glycosylation. T805 carries O-linked (Fuc...) threonine glycosylation. The EGF-like 22 domain maps to 829–867 (VLAPCATSPCKNSGVCKESEDYESFSCVCPTGWQGQTCE). Residues 869-905 (DINECVKSPCRHGASCQNTNGSYRCLCQAGYTGRNCE) form the EGF-like 23; calcium-binding domain. Residue N888 is glycosylated (N-linked (GlcNAc...) asparagine). O-linked (GlcNAc) threonine glycosylation occurs at T900. The EGF-like 24 domain maps to 907–943 (DIDDCRPNPCHNGGSCTDGINTAFCDCLPGFQGAFCE). S921 carries O-linked (Fuc) serine glycosylation. The 37-residue stretch at 945-981 (DINECASNPCQNGANCTDCVDSYTCTCPVGFNGIHCE) folds into the EGF-like 25; calcium-binding domain. Residue S951 is glycosylated (O-linked (Glc...) serine). A glycan (N-linked (GlcNAc...) asparagine) is linked at N959. An EGF-like 26 domain is found at 983-1019 (NTPDCTESSCFNGGTCVDGINSFTCLCPPGFTGSYCQ). T997 carries an O-linked (Fuc...) threonine glycan. An EGF-like 27; calcium-binding domain is found at 1021 to 1057 (DVNECDSRPCLHGGTCQDSYGTYKCTCPQGYTGLNCQ). S1027 carries O-linked (Glc...) serine glycosylation. T1035 carries an O-linked (Fuc...) threonine glycan. EGF-like domains are found at residues 1059 to 1095 (LVRWCDSAPCKNGGRCWQTNTQYHCECRSGWTGVNCD) and 1097 to 1143 (LSVS…SYCE). S1065 is a glycosylation site (O-linked (Glc...) serine). Positions 1145–1181 (EVDECSPNPCQNGATCTDYLGGFSCKCVAGYHGSNCS) constitute an EGF-like 30; calcium-binding domain. T1159 is a glycosylation site (O-linked (Fuc...) threonine). Residue N1179 is glycosylated (N-linked (GlcNAc...) asparagine). The EGF-like 31; calcium-binding domain maps to 1183–1219 (EINECLSQPCQNGGTCIDLTNSYKCSCPRGTQGVHCE). O-linked (Glc...) serine glycosylation is present at S1189. An O-linked (Fuc...) threonine glycan is attached at T1197. Positions 1221–1265 (NVDDCHPPLDPASRSPKCFNNGTCVDQVGGYTCTCPPGFVGERCE) constitute an EGF-like 32; calcium-binding domain. N1241 carries N-linked (GlcNAc...) asparagine glycosylation. EGF-like domains lie at 1267–1305 (DVNECLSNPCDPRGTQNCVQRVNDFHCECRAGHTGRRCE), 1307–1346 (VINGCRGKPCKNGGVCAVASNTARGFICRCPAGFEGATCE), 1348–1384 (DARTCGSLRCLNGGTCISGPRSPTCLCLGSFTGPECQ), and 1387–1426 (ASSPCVGSNPCYNQGTCEPTSENPFYRCLCPAKFNGLLCH). O-linked (Glc...) serine glycosylation occurs at S1273. T1362 is a glycosylation site (O-linked (Fuc...) threonine). O-linked (GlcNAc...) threonine glycosylation occurs at T1379. O-linked (Fuc...) threonine; alternate glycosylation is present at T1402. A glycan (O-linked (GalNAc...) threonine; alternate) is linked at T1402. 3 LNR repeats span residues 1449 to 1489 (CELP…PWKN), 1490 to 1531 (CTQS…CNPL), and 1532 to 1571 (YDQYCKDHFSDGHCDQGCNSAECEWDGLDCAEHVPERLAA). Ca(2+) is bound by residues D1457, N1460, D1475, and D1478. N1489 is a glycosylation site (N-linked (GlcNAc...) asparagine). 5 disulfides stabilise this stretch: C1490–C1514, C1496–C1509, C1505–C1521, C1536–C1549, and C1545–C1561. Residue N1587 is glycosylated (N-linked (GlcNAc...) asparagine). An interaction with PSEN1 region spans residues 1718–1750 (PPLPSQLHLMYVAAAAFVLLFFVGCGVLLSRKR). Residues 1726–1746 (LMYVAAAAFVLLFFVGCGVLL) form a helical membrane-spanning segment. Topologically, residues 1747–2531 (SRKRRRQHGQ…QITHIPEAFK (785 aa)) are cytoplasmic. K1749 participates in a covalent cross-link: Glycyl lysine isopeptide (Lys-Gly) (interchain with G-Cter in ubiquitin). A disordered region spans residues 1770 to 1798 (KKKRREPLGEDSVGLKPLKNASDGALMDD). Position 1851 is a phosphothreonine (T1851). ANK repeat units follow at residues 1917 to 1946 (TGETALHLAARYSRSDAAKRLLEASADANI), 1950 to 1980 (MGRTPLHAAVSADAQGVFQILLRNRATDLDA), 1984 to 2013 (DGTTPLILAARLAVEGMLEDLINSHADVNA), 2017 to 2046 (LGKSALHWAAAVNNVDAAVVLLKNGANKDM), and 2050 to 2079 (KEETPLFLAAREGSYETAKVLLDHFANRDI). Residues 1937-1945 (LLEASADAN) form an HIF1AN-binding region. Residue N1945 is modified to (3S)-3-hydroxyasparagine; by HIF1AN; partial. Positions 2004–2012 (LINSHADVN) are HIF1AN-binding. Residue N2012 is modified to (3S)-3-hydroxyasparagine; by HIF1AN; partial. 3 disordered regions span residues 2140–2185 (KSAT…DSSS), 2382–2428 (QPQN…SLPV), and 2440–2531 (PTSL…EAFK). A compositionally biased stretch (low complexity) spans 2382–2395 (QPQNLQPPSQPHLS). Polar residues predominate over residues 2440–2478 (PTSLPSSMVPPMTTTQFLTPPSQHSYSSSPVDNTPSHQL). Residues 2488-2503 (PSPESPDQWSSSSPHS) show a composition bias toward low complexity. The segment covering 2504-2524 (NISDWSEGISSPPTTMPSQIT) has biased composition (polar residues).

The protein belongs to the NOTCH family. Heterodimer of a C-terminal fragment N(TM) and an N-terminal fragment N(EC) which are probably linked by disulfide bonds. Interacts with DNER, DTX1, DTX2 and RBPJ/RBPSUH. Also interacts with MAML1, MAML2 and MAML3 which act as transcriptional coactivators for NOTCH1. Notch 1 intracellular domain interacts with SNW1; the interaction involves multimerized NOTCH1 NICD and is implicated in a formation of an intermediate preactivation complex which associates with DNA-bound CBF-1/RBPJ. The activated membrane-bound form interacts with AAK1 which promotes NOTCH1 stabilization. Forms a trimeric complex with FBXW7 and SGK1. Interacts with HIF1AN. HIF1AN negatively regulates the function of notch intracellular domain (NICD), accelerating myogenic differentiation. Interacts (via NICD) with SNAI1 (via zinc fingers); the interaction induces SNAI1 degradation via MDM2-mediated ubiquitination and inhibits SNAI1-induced cell invasion. Interacts (via NICD) with MDM2A. Interacts (via NICD) with BCL6; the interaction decreases MAML1 recruitment by NOTCH1 NICD on target genes DNA and inhibits NOTCH1 transactivation activity. Interacts with THBS4. Interacts (via the EGF-like repeat region) with CCN3 (via CTCK domain). Interacts (via EGF-like domains) with DLL4 (via N-terminal DSL and MNNL domains). Interacts with ZMIZ1. Interacts (via NICD domain) with MEGF10 (via the cytoplasmic domain). Interacts with DLL1 and JAG1. Interacts (via NICD domain) with PRAG1. Forms a complex with PRAG1, N1ICD and MAML1, in a MAML1-dependent manner. Interacts (via transmembrane region) with PSEN1; the interaction is direct. Interacts with ZFP64. In terms of processing, synthesized in the endoplasmic reticulum as an inactive form which is proteolytically cleaved by a furin-like convertase in the trans-Golgi network before it reaches the plasma membrane to yield an active, ligand-accessible form. Cleavage results in a C-terminal fragment N(TM) and a N-terminal fragment N(EC). Following ligand binding, it is cleaved by ADAM17 to yield a membrane-associated intermediate fragment called notch extracellular truncation (NEXT). Following endocytosis, this fragment is then cleaved by one of the catalytic subunits of gamma-secretase (PSEN1 or PSEN2) to release a Notch-derived peptide containing the intracellular domain (NICD) from the membrane. Post-translationally, phosphorylated. O-linked glycosylation by GALNT11 is involved in determination of left/right symmetry: glycosylation promotes activation of NOTCH1, possibly by promoting cleavage by ADAM17, modulating the balance between motile and immotile (sensory) cilia at the left-right organiser (LRO). O-glycosylated on the EGF-like domains. O-glucosylated at Ser-435 by KDELC1 and KDELC2. Contains both O-linked fucose and O-linked glucose in the EGF-like domains 11, 12 and 13, which are interacting with the residues on DLL4. O-glycosylation at Ser-1027 is only partial. MFNG-, RFNG- and LFNG-mediated modification of O-fucose residues at specific EGF-like domains results in inhibition of its activation by JAG1 and enhancement of its activation by DLL1 via an increased binding to DLL1. In terms of processing, ubiquitinated. Undergoes 'Lys-29'-linked polyubiquitination by ITCH; promotes the lysosomal degradation of non-activated internalized NOTCH1. Deubiquitination by USP12 is required for transport of internalized non-activated receptor from late endosomes to lysosomes for degradation. Monoubiquitination at Lys-1749 is required for activation by gamma-secretase cleavage, it promotes interaction with AAK1, which stabilizes it. Deubiquitination by EIF3F is necessary for nuclear import of activated Notch. Post-translationally, hydroxylated at Asn-1945 and Asn-2012 by HIF1AN. Hydroxylation reduces affinity for HI1AN and may thus indirectly modulate negative regulation of NICD. Highly expressed in the brain, lung and thymus. Expressed at lower levels in the spleen, bone-marrow, spinal cord, eyes, mammary gland, liver, intestine, skeletal muscle, kidney and heart. In the hair follicle, highly expressed exclusively in the epithelial compartment.

It localises to the cell membrane. It is found in the late endosome membrane. The protein localises to the nucleus. In terms of biological role, functions as a receptor for membrane-bound ligands Jagged-1 (JAG1), Jagged-2 (JAG2) and Delta-1 (DLL1) to regulate cell-fate determination. Upon ligand activation through the released notch intracellular domain (NICD) it forms a transcriptional activator complex with RBPJ/RBPSUH and activates genes of the enhancer of split locus. Affects the implementation of differentiation, proliferation and apoptotic programs. Involved in angiogenesis; negatively regulates endothelial cell proliferation and migration and angiogenic sprouting. Involved in the maturation of both CD4(+) and CD8(+) cells in the thymus. Important for follicular differentiation and possibly cell fate selection within the follicle. During cerebellar development, functions as a receptor for neuronal DNER and is involved in the differentiation of Bergmann glia. Represses neuronal and myogenic differentiation. May play an essential role in postimplantation development, probably in some aspect of cell specification and/or differentiation. May be involved in mesoderm development, somite formation and neurogenesis. May enhance HIF1A function by sequestering HIF1AN away from HIF1A. Required for the THBS4 function in regulating protective astrogenesis from the subventricular zone (SVZ) niche after injury. Involved in determination of left/right symmetry by modulating the balance between motile and immotile (sensory) cilia at the left-right organiser (LRO). The protein is Neurogenic locus notch homolog protein 1 (Notch1) of Mus musculus (Mouse).